Here is a 633-residue protein sequence, read N- to C-terminus: Chaperone protein HtpG (633 aa).

Positions 1–341 (MSATSSKETL…SADLPLNVSR (341 aa)) are a; substrate-binding. The interval 342–558 (EILQSSRDID…EGDMSANLER (217 aa)) is b. The interval 559-633 (LLKAAGQAAP…LNGLLAMLPG (75 aa)) is c.

This sequence belongs to the heat shock protein 90 family. As to quaternary structure, homodimer.

The protein localises to the cytoplasm. Functionally, molecular chaperone. Has ATPase activity. This Thiobacillus denitrificans (strain ATCC 25259 / T1) protein is Chaperone protein HtpG.